The sequence spans 397 residues: MGCIKVISVFLAAVAAVDARAFFHNRGGNDVIPNSYIVVMKDGVTAEDFDSHISSVATTHSINKAKRGSETVGHKDSFNINGWRAYNGHFDEATIESILNDDKVDYVEHDRVVKLAALTTQPNAPTWGLGRVSHKAPGNKDFVYDSSAGQGVTIYGVDTGIDINHPEFRGRIRWGTNTVDNDNTDGNGHGTHTAGTFAGTTYGVAKKANIVAVKVLSAGGSGSTAGVIKGIDWCVTDAKAKGALGKAALNLSLGGAFSQANNDAVTRAQNAGIFVAVAAGNDNKDAKNSSPASAPAVCTAASSTIDDQKSSFSNWGTIVDIYAPGSNILSAAPGGGTRTLSGTSMASPHVCGVGAAMLAQGVSVAQACDRIKQIANAVIKNPGTGTTNKLLYNGSGR.

The N-terminal stretch at 1–19 is a signal peptide; sequence MGCIKVISVFLAAVAAVDA. Positions 20-116 are excised as a propeptide; that stretch reads RAFFHNRGGN…VEHDRVVKLA (97 aa). The region spanning 35–116 is the Inhibitor I9 domain; the sequence is SYIVVMKDGV…VEHDRVVKLA (82 aa). One can recognise a Peptidase S8 domain in the interval 126–397; it reads TWGLGRVSHK…NKLLYNGSGR (272 aa). Active-site charge relay system residues include aspartate 158 and histidine 189. Asparagine 250 carries N-linked (GlcNAc...) asparagine glycosylation. The active-site Charge relay system is the serine 344. The N-linked (GlcNAc...) asparagine glycan is linked to asparagine 393.

Belongs to the peptidase S8 family.

Its subcellular location is the secreted. Functionally, secreted subtilisin-like serine protease with keratinolytic activity that contributes to pathogenicity. This chain is Subtilisin-like protease 3 (SUB3), found in Arthroderma otae (strain ATCC MYA-4605 / CBS 113480) (Microsporum canis).